Here is a 389-residue protein sequence, read N- to C-terminus: Large envelope protein (389 aa).

An N-acetylmethionine modification is found at Met1. The N-myristoyl glycine; by host moiety is linked to residue Gly2. The interval 2-108 is pre-S1; sequence GTNLSVPNPL…PPLRDSHPQA (107 aa). Positions 2-163 are pre-S; that stretch reads GTNLSVPNPL…SARTGDPVTI (162 aa). The Virion surface; in external conformation segment spans residues 2 to 170; the sequence is GTNLSVPNPL…VTIMENITSG (169 aa). Residues 2-242 are Intravirion; in internal conformation-facing; the sequence is GTNLSVPNPL…PGYRWMCLRR (241 aa). A compositionally biased stretch (polar residues) spans 77–95; sequence VSTIPPPASTNRQSGRQPT. The segment at 77–103 is disordered; it reads VSTIPPPASTNRQSGRQPTPISPPLRD. The pre-S2 stretch occupies residues 109–163; the sequence is MQWNSTALHQALQDPRVRGLYLPAGGSSSGTVNPAPNIASHISSISARTGDPVTI. The chain crosses the membrane as a helical span at residues 171–191; sequence FLGPLLVLQAGFFLLTRILTI. Residues 192–242 lie on the Intravirion; in external conformation side of the membrane; the sequence is PQSLDSWWTSLNFLGGSPVCLGQNSQSPTSNHSPTSCPPICPGYRWMCLRR. Residues 243 to 263 form a helical membrane-spanning segment; sequence FIIFLFILLLCLIFLLVLLDY. At 264–337 the chain is on the virion surface side; sequence QGMLPVCPLI…WASVRFSWLS (74 aa). Asn309 carries an N-linked (GlcNAc...) asparagine; by host glycan. A helical membrane pass occupies residues 338-358; that stretch reads LLVPFVQWFVGLSPTVWLSAI. The Intravirion portion of the chain corresponds to 359–364; the sequence is WMMWYW. The helical transmembrane segment at 365–387 threads the bilayer; that stretch reads GPSLYSIVSPFIPLLPIFFCLWV. Residues 388-389 are Virion surface-facing; it reads YI.

Belongs to the orthohepadnavirus major surface antigen family. As to quaternary structure, in its internal form (Li-HBsAg), interacts with the capsid protein and with the isoform S. Interacts with host chaperone CANX. In terms of assembly, associates with host chaperone CANX through its pre-S2 N glycan; this association may be essential for isoform M proper secretion. Interacts with isoform L. Interacts with the antigens of satellite virus HDV (HDVAgs); this interaction is required for encapsidation of HDV genomic RNA. Isoform M is N-terminally acetylated by host at a ratio of 90%, and N-glycosylated by host at the pre-S2 region. Post-translationally, myristoylated.

Its subcellular location is the virion membrane. Functionally, the large envelope protein exists in two topological conformations, one which is termed 'external' or Le-HBsAg and the other 'internal' or Li-HBsAg. In its external conformation the protein attaches the virus to cell receptors and thereby initiating infection. This interaction determines the species specificity and liver tropism. This attachment induces virion internalization predominantly through caveolin-mediated endocytosis. The large envelope protein also assures fusion between virion membrane and endosomal membrane. In its internal conformation the protein plays a role in virion morphogenesis and mediates the contact with the nucleocapsid like a matrix protein. Its function is as follows. The middle envelope protein plays an important role in the budding of the virion. It is involved in the induction of budding in a nucleocapsid independent way. In this process the majority of envelope proteins bud to form subviral lipoprotein particles of 22 nm of diameter that do not contain a nucleocapsid. This is Large envelope protein from Hepatitis B virus genotype A2 subtype adw (isolate Japan/Nishioka/1983) (HBV-A).